The sequence spans 351 residues: F-box protein At1g47810 (351 aa).

One can recognise an F-box domain in the interval 8-54 (LQSLDPIPVDVLFEIFLNLPAKFLARFVCVSKLWAKIIRNQDFIRSF).

The sequence is that of F-box protein At1g47810 from Arabidopsis thaliana (Mouse-ear cress).